A 1295-amino-acid chain; its full sequence is Phosphoribosylformylglycinamidine synthase (1295 aa).

The tract at residues 302 to 327 (SPWPGASTGSGGEIRDEGATGRGAKP) is disordered. ATP-binding positions include 306 to 317 (GASTGSGGEIRD) and A677. Mg(2+) contacts are provided by D678, E717, N721, and D884. S886 contributes to the ATP binding site. The Glutamine amidotransferase type-1 domain occupies 1042-1295 (VAVLREQGVN…IFRNARKQLG (254 aa)). Residue C1135 is the Nucleophile of the active site. Catalysis depends on residues H1260 and E1262.

This sequence in the N-terminal section; belongs to the FGAMS family. As to quaternary structure, monomer.

It localises to the cytoplasm. The catalysed reaction is N(2)-formyl-N(1)-(5-phospho-beta-D-ribosyl)glycinamide + L-glutamine + ATP + H2O = 2-formamido-N(1)-(5-O-phospho-beta-D-ribosyl)acetamidine + L-glutamate + ADP + phosphate + H(+). Its pathway is purine metabolism; IMP biosynthesis via de novo pathway; 5-amino-1-(5-phospho-D-ribosyl)imidazole from N(2)-formyl-N(1)-(5-phospho-D-ribosyl)glycinamide: step 1/2. Its function is as follows. Phosphoribosylformylglycinamidine synthase involved in the purines biosynthetic pathway. Catalyzes the ATP-dependent conversion of formylglycinamide ribonucleotide (FGAR) and glutamine to yield formylglycinamidine ribonucleotide (FGAM) and glutamate. The polypeptide is Phosphoribosylformylglycinamidine synthase (Photorhabdus laumondii subsp. laumondii (strain DSM 15139 / CIP 105565 / TT01) (Photorhabdus luminescens subsp. laumondii)).